A 291-amino-acid chain; its full sequence is Citrate lyase subunit beta (291 aa).

Substrate-binding residues include Arg66 and Glu129. Positions 129 and 156 each coordinate Mg(2+).

The protein belongs to the HpcH/HpaI aldolase family. Citrate lyase beta subunit subfamily. As to quaternary structure, oligomer with a subunit composition of (alpha,beta,gamma)6. Mg(2+) serves as cofactor.

The protein resides in the cytoplasm. It catalyses the reaction citrate = oxaloacetate + acetate. The enzyme catalyses (3S)-citryl-CoA = oxaloacetate + acetyl-CoA. Represents a citryl-ACP lyase. This chain is Citrate lyase subunit beta (citE), found in Haemophilus influenzae (strain ATCC 51907 / DSM 11121 / KW20 / Rd).